Reading from the N-terminus, the 183-residue chain is MSIEIANESGVEVPEPSIVSVARFALDKMSVSQLAELSIVLVELDVMSDLHERWMDLPGPTDVMAFPMDEYDSSRRPDSAGAGPALLGDIVLCPAFAKDQARKAGHSLLDELHLLTVHGVLHLLGYDHAEPEEEREMFGLQNQILADFRAAKAAAEREQAQRSADSAVLGAVGLEEQDGPGTH.

Residues H118, H122, and H128 each contribute to the Zn(2+) site. Positions 156-183 (EREQAQRSADSAVLGAVGLEEQDGPGTH) are disordered.

This sequence belongs to the endoribonuclease YbeY family. The cofactor is Zn(2+).

The protein resides in the cytoplasm. In terms of biological role, single strand-specific metallo-endoribonuclease involved in late-stage 70S ribosome quality control and in maturation of the 3' terminus of the 16S rRNA. This is Endoribonuclease YbeY from Saccharopolyspora erythraea (strain ATCC 11635 / DSM 40517 / JCM 4748 / NBRC 13426 / NCIMB 8594 / NRRL 2338).